Consider the following 897-residue polypeptide: MGMATYAVVDLETTGNQLDFDDIIQIGITFVRNNQIIDTYHSMIRTNLEIPPFIQALTSIEENMLQQAPYFNQVAEEIYDKIKDCIFVAHNVDFDLNFIKKAFKDCNIQYRPKKVIDTLEIFKIAFPTDKSYQLSELAEAHGITLANAHRADEDAATTAKLMILAFEKFEKLPLDTLKQLYYLSKQLKYDLYDIFFEMVRQYDAKPLDKSYEKFEQIIYRKQVDFKKPTTNYNGSLKSLYSKAVDQLGLTYRPQQLYLAETILDQLMHSEKAMIEASLGSGKSLAYLLAALMYNIETGKHVMISTNTKLLQSQLLEKDIPAMNEALNFKINALLIKSKSDYISLGLISQILKDDTSNYEVNILKMQLLIWITETPSGDIQELNLKGGQKMYFDQKIETYVPARHDVHYYNFIKRNAQNIQIGITNHAHLIHSDVENSIYQLFDDCIVDEAHRLPDYALNQVTNELSYADIKYQLGLIGKNENEKLLKAIDQLEKQRILEKLDIAPIDIFGLKASMNEIHELNEQLFSTIFTIINDSDVYDDDIHRFHNVFTFETKDILKDLHAIIDKLNKTLEIFNGISHKTVKSLRKQLLYLKDKFKNIEQSLKAGHTSFISIKNLSQKSTIRLYVKDYAVKDVLTKQVLEKFKSLIFISGTLKFNHSFDAFKQLFNKDVHFNTFEVNTSLQSAKNTSVFIPSDVASYQYKNIDEYVASIVSYIIEYTTITSSKCLVLFTSYKMMHMVQDMLNELPEFEDYVVLTQQQNQNYKIVQQFNNFDKAILLGTSTFFEGFDFQANGIKCVMIAKLPFMNKHNAKYWLMDSEFTSTFKEYVLPDAVTRFRQGLGRLIRNENDRGIIVSFDDRLINSNYKNFFEQTLENYRQKKGDIQQFGKLLRQIQKKKK.

Residues 8–161 (VVDLETTGNQ…DEDAATTAKL (154 aa)) form the Exonuclease domain. The 256-residue stretch at 241–496 (SKAVDQLGLT…KAIDQLEKQR (256 aa)) folds into the Helicase ATP-binding domain. 276–283 (ASLGSGKS) lines the ATP pocket. A DEAH box motif is present at residues 448–451 (DEAH). The 191-residue stretch at 703–893 (NIDEYVASIV…QFGKLLRQIQ (191 aa)) folds into the Helicase C-terminal domain.

The protein belongs to the helicase family. DinG subfamily. Type 2 sub-subfamily. As to quaternary structure, monomer in solution.

Its activity is regulated as follows. The nuclease activity is inhibited by ATP or ADP. Functionally, 3'-5' exonuclease acting on single-stranded DNA (ssDNA) and RNA (ssRNA) substrates. Displays ssDNA-stimulated ATPase activity, but lacks helicase activity. This is 3'-5' exonuclease DinG from Staphylococcus aureus (strain MRSA252).